A 198-amino-acid polypeptide reads, in one-letter code: Small ribosomal subunit protein uS4 (198 aa).

Residues 26-45 (LKKRPYAPGQHGQRRSKLSN) form a disordered region. An S4 RNA-binding domain is found at 91–154 (SRLDNVVYRL…KNLTIVKEAL (64 aa)).

Belongs to the universal ribosomal protein uS4 family. As to quaternary structure, part of the 30S ribosomal subunit. Contacts protein S5. The interaction surface between S4 and S5 is involved in control of translational fidelity.

Its function is as follows. One of the primary rRNA binding proteins, it binds directly to 16S rRNA where it nucleates assembly of the body of the 30S subunit. In terms of biological role, with S5 and S12 plays an important role in translational accuracy. In Acholeplasma laidlawii (strain PG-8A), this protein is Small ribosomal subunit protein uS4.